The primary structure comprises 512 residues: Probable malate:quinone oxidoreductase (512 aa).

The protein belongs to the MQO family. Requires FAD as cofactor.

The catalysed reaction is (S)-malate + a quinone = a quinol + oxaloacetate. It participates in carbohydrate metabolism; tricarboxylic acid cycle; oxaloacetate from (S)-malate (quinone route): step 1/1. The sequence is that of Probable malate:quinone oxidoreductase from Rhodococcus erythropolis (strain PR4 / NBRC 100887).